We begin with the raw amino-acid sequence, 336 residues long: Ephrin-B2 (336 aa).

Positions 1 to 28 (MAMARSRRDSVWKYCWGLLMVLCRTAIS) are cleaved as a signal peptide. Residues 29 to 232 (RSIVLEPIYW…LLGSEVALFA (204 aa)) are Extracellular-facing. The Ephrin RBD domain occupies 31 to 167 (IVLEPIYWNS…TRAMKILMKV (137 aa)). N-linked (GlcNAc...) asparagine glycosylation is present at N39. Intrachain disulfides connect C65/C104 and C92/C156. N-linked (GlcNAc...) asparagine glycosylation is present at N142. Residues 170 to 216 (DASSAGSARNHGPTRRPELEAGTNGRSSTTSPFVKPNPGSSTDGNSA) are disordered. The segment covering 193–216 (NGRSSTTSPFVKPNPGSSTDGNSA) has biased composition (polar residues). The helical transmembrane segment at 233–253 (GIASGCIIFIVIIITLVVLLL) threads the bilayer. Over 254–336 (KYRRRHRKHS…QSPANIYYKV (83 aa)) the chain is Cytoplasmic. S263 carries the phosphoserine modification. The residue at position 277 (T277) is a Phosphothreonine. At R280 the chain carries Omega-N-methylarginine. Positions 334–336 (YKV) match the PDZ-binding motif.

It belongs to the ephrin family. As to quaternary structure, interacts with PDZRN3. Binds to the ephrin receptor EPHA3, EPHA4 and EPHB4. In terms of processing, inducible phosphorylation of tyrosine residues in the cytoplasmic domain. As to expression, expressed in inner and outer pillar cells of the organ of Corti (at protein level). Expressed on lateral floor plate cells, specifically on commissural axon segments that have passed through the floor plate. Expressed in cells of the retinal ganglion cell layer during retinal axon guidance to the optic disk. Expressed in myogenic progenitor cells.

It localises to the cell membrane. The protein resides in the cell junction. It is found in the adherens junction. In terms of biological role, cell surface transmembrane ligand for Eph receptors, a family of receptor tyrosine kinases which are crucial for migration, repulsion and adhesion during neuronal, vascular and epithelial development. Binds promiscuously Eph receptors residing on adjacent cells, leading to contact-dependent bidirectional signaling into neighboring cells. The signaling pathway downstream of the receptor is referred to as forward signaling while the signaling pathway downstream of the ephrin ligand is referred to as reverse signaling. Binds to receptor tyrosine kinase including EPHA4, EPHA3 and EPHB4. Together with EPHB4 plays a central role in heart morphogenesis and angiogenesis through regulation of cell adhesion and cell migration. EPHB4-mediated forward signaling controls cellular repulsion and segregation from EFNB2-expressing cells. May play a role in constraining the orientation of longitudinally projecting axons. The sequence is that of Ephrin-B2 (Efnb2) from Mus musculus (Mouse).